The chain runs to 638 residues: Octopamine receptor 1 (638 aa).

The Extracellular portion of the chain corresponds to 1-28 (MSRDIFMKRLRLHLLFDEVAMVTHIVGD). A helical transmembrane segment spans residues 29 to 53 (VLSSVLLCAVVLLVLVGNTLVVAAV). At 54 to 64 (ATSRKLRTVTN) the chain is on the cytoplasmic side. Residues 65–87 (VFIVNLACADLLLGVLVLPFSAV) form a helical membrane-spanning segment. The Extracellular segment spans residues 88-102 (NEIKDVWIFGHVWCQ). A disulfide bond links Cys-101 and Cys-230. Residues 103 to 124 (VWLAVDVWLCTASILNLCCISL) form a helical membrane-spanning segment. Residues 125–147 (DRYLAITRPIRYPGLMSAKRAKT) lie on the Cytoplasmic side of the membrane. A helical transmembrane segment spans residues 148–167 (LVAGVWLFSFVICCPPLIGW). At 168–239 (NDGGDGIMDY…CELTNSRGYR (72 aa)) the chain is on the extracellular side. Asn-178, Asn-207, and Asn-215 each carry an N-linked (GlcNAc...) asparagine glycan. Residues 240–259 (IYAALGSFFIPMLVMVFFYL) form a helical membrane-spanning segment. The Cytoplasmic segment spans residues 260 to 520 (QIYRAAVKTI…FNREKKAAKT (261 aa)). A helical transmembrane segment spans residues 521–545 (LAIIVGAFIMCWMPFFTIYLVGAFC). Residues 546-551 (ENCISP) are Extracellular-facing. Residues 552 to 575 (IVFSVAFWLGYCNSAMNPCVYALF) traverse the membrane as a helical segment. Residues 576 to 638 (SRDFRFAFRK…TASGGNGGYT (63 aa)) are Cytoplasmic-facing. A disordered region spans residues 618–638 (DDAKSSSDIGPTASGGNGGYT).

The protein belongs to the G-protein coupled receptor 1 family. In terms of tissue distribution, expressed in the central nervous system.

It localises to the cell membrane. In terms of biological role, G-protein coupled receptor for octopamine (OA), which is a neurotransmitter, neurohormone, and neuromodulator in invertebrates. Activation of this receptor by octopamine induces an increase in both inositol phosphates and cyclic AMP. The coupling to adenylyl cyclase seems to be less efficient than the coupling to phospholipase C. The rank order of potency for agonists is p-synephrine &gt;= clonidine &gt; p-octopamine = xylometazoline = phenylephrine = oxymetazoline &gt; B-HT920 &gt; serotonin = p-tyramine &gt; epinephrine &gt; norepinephrine &gt; methoxamine = dopamine = histamine. For antagonists, the rank order is yohimbine &gt; chlopromazine / spiperone &gt; phentolamine &gt; mianserine &gt; rauwolscine &gt; prazosin &gt; alprenolol / propanolol &gt; pindolol. In Lymnaea stagnalis (Great pond snail), this protein is Octopamine receptor 1.